The primary structure comprises 1674 residues: Maestro heat-like repeat-containing protein family member 2A (1674 aa).

Residues 1–26 are disordered; the sequence is MTEAITEAAVASSEEVSEERDDLGPL. 14 HEAT repeats span residues 73–96, 97–133, 195–234, 254–292, 382–419, 424–461, 573–612, 615–641, 642–679, 739–776, 993–1030, 1221–1263, 1381–1420, and 1627–1674; these read ATTEPSVVINTLIRCLQVPEISTQ, RKVNIYNILQDIIQQEGELEEQCVQRLVAIASKEMRE, MPYMGITLATIFTMLRLANEAKIRQAICSAMETFCETVQF, LKVFPMYRYFVTVWLRHYNPEVKLGVIKSLKPMLGLLLP, SYPKELMKFFFSQMETNKEAVRVGTLNLIRAIVSADEP, RAIYLAIRVVKNTISDTRSKVRMAILHIIGQLALCGYQ, PAPQKLLARLLVLMSSPYKGEGRGIAMLNLLRTLSQSIAP, ADMWELEIALLVRYLEEHTEFTWDQKA, WEDKLIQFLRNSLKKTRGSSWSLRLSKELNNQIASFDS, KTVLNVLHDFEERIQESEQSWQISAWRKDHPWRRETVK, GQFGTMVGLIAPCTCDAHQRTRMASMNVLSSLLDLHAS, DPLM…SHRP, EKLLKPAALLLEKGADQEEDEALRVLSLRALGNMALGAPK, and LDFP…QGMS.

This is Maestro heat-like repeat-containing protein family member 2A (MROH2A) from Homo sapiens (Human).